A 336-amino-acid chain; its full sequence is Glycerol-3-phosphate dehydrogenase [NAD(P)+] (336 aa).

Residues Ser-14, Trp-15, Arg-35, Arg-36, and Lys-109 each contribute to the NADPH site. The sn-glycerol 3-phosphate site is built by Lys-109 and Gly-139. An NADPH-binding site is contributed by Ala-143. Lys-194, Asp-247, Ser-257, Arg-258, and Asn-259 together coordinate sn-glycerol 3-phosphate. Lys-194 functions as the Proton acceptor in the catalytic mechanism. Arg-258 provides a ligand contact to NADPH. Position 284 (Glu-284) interacts with NADPH.

This sequence belongs to the NAD-dependent glycerol-3-phosphate dehydrogenase family.

It is found in the cytoplasm. The enzyme catalyses sn-glycerol 3-phosphate + NAD(+) = dihydroxyacetone phosphate + NADH + H(+). The catalysed reaction is sn-glycerol 3-phosphate + NADP(+) = dihydroxyacetone phosphate + NADPH + H(+). The protein operates within membrane lipid metabolism; glycerophospholipid metabolism. Catalyzes the reduction of the glycolytic intermediate dihydroxyacetone phosphate (DHAP) to sn-glycerol 3-phosphate (G3P), the key precursor for phospholipid synthesis. The sequence is that of Glycerol-3-phosphate dehydrogenase [NAD(P)+] from Streptomyces coelicolor (strain ATCC BAA-471 / A3(2) / M145).